Reading from the N-terminus, the 195-residue chain is Probable chemoreceptor glutamine deamidase CheD 2 (195 aa).

It belongs to the CheD family.

It carries out the reaction L-glutaminyl-[protein] + H2O = L-glutamyl-[protein] + NH4(+). In terms of biological role, probably deamidates glutamine residues to glutamate on methyl-accepting chemotaxis receptors (MCPs), playing an important role in chemotaxis. The chain is Probable chemoreceptor glutamine deamidase CheD 2 from Burkholderia thailandensis (strain ATCC 700388 / DSM 13276 / CCUG 48851 / CIP 106301 / E264).